A 428-amino-acid chain; its full sequence is MSKSDQLFEQARQTIPGGVNSPVRAFNGVGGTPRFIDHADGAYLYDVDGQAYVDYIGSWGPMLLGHNHPAIKAAVIKAVEKGLSYGAPTEIEVLMAEKVRQIVPSMEQVRMVNSGTEATMSAIRLARGYTGRDKIVKFEGCYHGHADSLLVKAGSGALTLGQPNSPGVPADFAKHTLTCVFNDLDSVREAFTQYGCDIACIIVEPVAGNMNCIPPVPGFLEGLRTICDEFGALLILDEVMTGFRVSLRGAQGYYNIDPDLTTLGKIIGAGMPVGAFGGKKKVMQHIAPTGPVYQAGTLSGNPVAMAAGLTMLDLLLEPGLYEQLNAKTARVAEGLKAAAAKHGIPLAINYVGGMFGFFFTDEPEITRYEQVTRCDMERFKRFYHLMLEEGVYLAPSAYEAGFLSLAHGDKEIEHTLAAAERSFAKLAG.

Position 265 is an N6-(pyridoxal phosphate)lysine (Lys-265).

The protein belongs to the class-III pyridoxal-phosphate-dependent aminotransferase family. HemL subfamily. In terms of assembly, homodimer. Requires pyridoxal 5'-phosphate as cofactor.

It localises to the cytoplasm. It catalyses the reaction (S)-4-amino-5-oxopentanoate = 5-aminolevulinate. The protein operates within porphyrin-containing compound metabolism; protoporphyrin-IX biosynthesis; 5-aminolevulinate from L-glutamyl-tRNA(Glu): step 2/2. The protein is Glutamate-1-semialdehyde 2,1-aminomutase of Aeromonas salmonicida (strain A449).